We begin with the raw amino-acid sequence, 676 residues long: Ion-translocating oxidoreductase complex subunit C (676 aa).

4Fe-4S ferredoxin-type domains are found at residues 369–397 (GEPQEEQNCIRCSACADACPADLLPQQLY) and 407–436 (KATTHNIADCIECGACAWVCPSNIPLVQYF). Positions 377, 380, 383, 387, 416, 419, 422, and 426 each coordinate [4Fe-4S] cluster. Residues 600-652 (ARKLEQQQANAEPEQQVDPRKAAVEAAIARAKARKLEQQQANAEPEEQVDPRK) are disordered. The span at 605–615 (QQQANAEPEQQ) shows a compositional bias: low complexity.

This sequence belongs to the 4Fe4S bacterial-type ferredoxin family. RnfC subfamily. In terms of assembly, the complex is composed of six subunits: RsxA, RsxB, RsxC, RsxD, RsxE and RsxG. It depends on [4Fe-4S] cluster as a cofactor.

Its subcellular location is the cell inner membrane. In terms of biological role, part of a membrane-bound complex that couples electron transfer with translocation of ions across the membrane. Required to maintain the reduced state of SoxR. The sequence is that of Ion-translocating oxidoreductase complex subunit C from Escherichia coli (strain SMS-3-5 / SECEC).